Consider the following 338-residue polypeptide: Glyceraldehyde-3-phosphate dehydrogenase, cytosolic (338 aa).

The interval 2–153 (ADKKIKIGIN…YKSDLNIVSN (152 aa)) is binding to NAD. NAD(+)-binding positions include 15–16 (RI) and aspartate 37. The external loop stretch occupies residues 56-75 (GQWKHNELKVKDEKTLLFGE). Arginine 84 provides a ligand contact to NAD(+). The tract at residues 154-338 (ASCTTNCLAP…VDLIIHMSKA (185 aa)) is catalytic. D-glyceraldehyde 3-phosphate is bound at residue 155–157 (SCT). Residue cysteine 156 is the Nucleophile of the active site. An S-nitrosocysteine mark is found at cysteine 156 and cysteine 160. The S-loop stretch occupies residues 183–206 (HSITATQKTVDGPSMKDWRGGRAA). Residues threonine 186, 215–216 (TG), and arginine 238 each bind D-glyceraldehyde 3-phosphate. Residue asparagine 320 participates in NAD(+) binding.

The protein belongs to the glyceraldehyde-3-phosphate dehydrogenase family. Homotetramer.

Its subcellular location is the cytoplasm. It carries out the reaction D-glyceraldehyde 3-phosphate + phosphate + NAD(+) = (2R)-3-phospho-glyceroyl phosphate + NADH + H(+). Its pathway is carbohydrate degradation; glycolysis; pyruvate from D-glyceraldehyde 3-phosphate: step 1/5. Key enzyme in glycolysis that catalyzes the first step of the pathway by converting D-glyceraldehyde 3-phosphate (G3P) into 3-phospho-D-glyceroyl phosphate. Essential for the maintenance of cellular ATP levels and carbohydrate metabolism. This is Glyceraldehyde-3-phosphate dehydrogenase, cytosolic (GAPC) from Sinapis alba (White mustard).